Reading from the N-terminus, the 337-residue chain is Tetraacyldisaccharide 4'-kinase (337 aa).

58–65 (TVGGSGKT) contacts ATP.

This sequence belongs to the LpxK family.

It catalyses the reaction a lipid A disaccharide + ATP = a lipid IVA + ADP + H(+). It participates in glycolipid biosynthesis; lipid IV(A) biosynthesis; lipid IV(A) from (3R)-3-hydroxytetradecanoyl-[acyl-carrier-protein] and UDP-N-acetyl-alpha-D-glucosamine: step 6/6. In terms of biological role, transfers the gamma-phosphate of ATP to the 4'-position of a tetraacyldisaccharide 1-phosphate intermediate (termed DS-1-P) to form tetraacyldisaccharide 1,4'-bis-phosphate (lipid IVA). The polypeptide is Tetraacyldisaccharide 4'-kinase (Shewanella putrefaciens (strain CN-32 / ATCC BAA-453)).